Reading from the N-terminus, the 338-residue chain is MKKEFDFILIGRITIDFNPTDYYNNLENSSLFKKYIGGSAANIAIGLSRLKNKVGFFGSVSDDQFGNFVLNVFENEKIDISRIKKTKDHKLGLTFTEMLSEEKSTILMYRDNVADLQIDVSDIDLDYILRTKILVISGTSLAKSPSREAVLKALFLAKNNGIKVVFDIDYRPYSWKNLDEVSLYYQIVAQNSDLIIGSYEEIQLTSRFCLENPENLIDDDYAKYWLKFVDLIIIKNGKKGSKLYQKDKKLVAKIVPVKMLKGYGGGDAYASLFLDHYLKNESDLENGLALATSAASIMVQSHSSFDLPDYQKILEFKDNALKSDPDLVQKKEWNAFKK.

Belongs to the carbohydrate kinase PfkB family.

The catalysed reaction is 5-dehydro-2-deoxy-D-gluconate + ATP = 6-phospho-5-dehydro-2-deoxy-D-gluconate + ADP + H(+). It participates in polyol metabolism; myo-inositol degradation into acetyl-CoA; acetyl-CoA from myo-inositol: step 5/7. Catalyzes the phosphorylation of 5-dehydro-2-deoxy-D-gluconate (2-deoxy-5-keto-D-gluconate or DKG) to 6-phospho-5-dehydro-2-deoxy-D-gluconate (DKGP). In Mesomycoplasma hyopneumoniae (strain J / ATCC 25934 / NCTC 10110) (Mycoplasma hyopneumoniae), this protein is 5-dehydro-2-deoxygluconokinase.